A 113-amino-acid chain; its full sequence is Cytochrome c2 (113 aa).

Heme c-binding residues include C15, C18, H19, and M92.

This sequence belongs to the cytochrome c family. Binds 1 heme c group covalently per subunit.

Its function is as follows. Cytochrome c2 is found mainly in purple, non-sulfur, photosynthetic bacteria where it functions as the electron donor to the oxidized bacteriochlorophyll in the photophosphorylation pathway. However, it may also have a role in the respiratory chain and is found in some non-photosynthetic bacteria. The chain is Cytochrome c2 from Pararhodospirillum photometricum (Rhodospirillum photometricum).